Here is a 334-residue protein sequence, read N- to C-terminus: DNA-directed RNA polymerase subunit alpha (334 aa).

The segment at 1 to 234 (MQRSLNEFLT…QQLAVFVDFD (234 aa)) is alpha N-terminal domain (alpha-NTD). The tract at residues 248–334 (IDPILLRPVD…IRGDDRVLGG (87 aa)) is alpha C-terminal domain (alpha-CTD).

The protein belongs to the RNA polymerase alpha chain family. In terms of assembly, homodimer. The RNAP catalytic core consists of 2 alpha, 1 beta, 1 beta' and 1 omega subunit. When a sigma factor is associated with the core the holoenzyme is formed, which can initiate transcription.

It catalyses the reaction RNA(n) + a ribonucleoside 5'-triphosphate = RNA(n+1) + diphosphate. DNA-dependent RNA polymerase catalyzes the transcription of DNA into RNA using the four ribonucleoside triphosphates as substrates. This Hahella chejuensis (strain KCTC 2396) protein is DNA-directed RNA polymerase subunit alpha.